An 82-amino-acid chain; its full sequence is MNKQNLIDVEGSVTESLPNGMFRVRLDNGCQVPTHISGKIRRNHVRILPGDRVKVELSPYDLTKGRIIYRLRNKSSNDWITS.

The 72-residue stretch at Met-1–Arg-72 folds into the S1-like domain.

This sequence belongs to the IF-1 family. As to quaternary structure, component of the 30S ribosomal translation pre-initiation complex which assembles on the 30S ribosome in the order IF-2 and IF-3, IF-1 and N-formylmethionyl-tRNA(fMet); mRNA recruitment can occur at any time during PIC assembly.

Its subcellular location is the plastid. The protein resides in the chloroplast. Its function is as follows. One of the essential components for the initiation of protein synthesis. Stabilizes the binding of IF-2 and IF-3 on the 30S subunit to which N-formylmethionyl-tRNA(fMet) subsequently binds. Helps modulate mRNA selection, yielding the 30S pre-initiation complex (PIC). Upon addition of the 50S ribosomal subunit IF-1, IF-2 and IF-3 are released leaving the mature 70S translation initiation complex. This chain is Translation initiation factor IF-1, chloroplastic, found in Cycas taitungensis (Prince sago).